The sequence spans 72 residues: Lantibiotic lichenicidin VK21 A2 (72 aa).

The segment at 1-21 (MKTMKNSAAREAFKGANHPAG) is disordered. Residues 1-40 (MKTMKNSAAREAFKGANHPAGMVSEEELKALVGGNDVNPE) constitute a propeptide that is removed on maturation. Threonine 41 bears the 2-oxobutanoic acid mark. Threonine 42, threonine 45, and threonine 46 each carry (Z)-2,3-didehydrobutyrine. Positions 47–51 (SSWTC) form a cross-link, lanthionine (Ser-Cys). Position 48 is a 2,3-didehydroalanine (Ser) (serine 48). A (Z)-2,3-didehydrobutyrine mark is found at threonine 53 and threonine 57. A cross-link (lanthionine (Ser-Cys)) is located at residues 59–63 (SASLC). 2 cross-links (beta-methyllanthionine (Thr-Cys)) span residues 65-68 (TTKC) and 69-72 (TSRC). (Z)-2,3-didehydrobutyrine is present on threonine 66.

In terms of processing, maturation of lantibiotics involves the enzymatic conversion of Thr, and Ser into dehydrated AA and the formation of thioether bonds with cysteine. This is followed by membrane translocation and cleavage of the modified precursor. Post-translationally, the 2,3-didehydrobutyrines are determined to be the Z-isomers.

It localises to the secreted. Functionally, lanthionine-containing peptide antibiotic (lantibiotic) active on Gram-positive bacteria. The bactericidal activity of lantibiotics is based on depolarization of energized bacterial cytoplasmic membranes, initiated by the formation of aqueous transmembrane pores. When present individually, LchA2 exhibits activity towards B.subtilis L1 (IC(50)=30 uM), Rhodococcus sp. SS2 (IC(50)=16.6 uM), M.luteus B1314 (IC(50)=2.6 uM), B.megaterium VKM41 (IC(50)=2 uM), S.aureus 209p (IC(50)=20 uM), B.pumilus 2001, B.globigii I, B.amyloliquefaciens I, M.smegmatis 1171 and M.phlei 1291. However, when combined with LchA1, it displays much stronger activity against B.subtilis L1 (IC(50)=0.64 uM), Rhodococcus sp. SS2 (IC(50)=0.64 uM), M.luteus B1314 (IC(50)=0.09 uM), B.megaterium VKM41 (IC(50)=0.12 uM) and S.aureus 209p (IC(50)=0.64 uM). The activity of the combined LchA1 and LchA2 peptides is strongest at a molar ratio of 1. Even when applied at 17-fold concentration of the highest IC(50) values for Gram-positive bacteria, neither the individual nor the combined peptides display activity against Gram-negative bacteria P.aeruginosa PAO1, P.putida I-97 or E.coli C600. The chain is Lantibiotic lichenicidin VK21 A2 from Bacillus licheniformis.